The chain runs to 87 residues: Large ribosomal subunit protein bL27 (87 aa).

A disordered region spans residues 1-25; that stretch reads MAHKKGASSSRNGRDSNAQRLGVKR. Polar residues predominate over residues 7–19; it reads ASSSRNGRDSNAQ.

Belongs to the bacterial ribosomal protein bL27 family.

This chain is Large ribosomal subunit protein bL27, found in Rhodococcus jostii (strain RHA1).